The following is a 285-amino-acid chain: Diphthine methyl ester synthase (285 aa).

S-adenosyl-L-methionine is bound by residues leucine 9, aspartate 84, glycine 87, 112–113 (SI), leucine 163, valine 221, and histidine 246.

It belongs to the diphthine synthase family.

The protein localises to the cytoplasm. The enzyme catalyses 2-[(3S)-amino-3-carboxypropyl]-L-histidyl-[translation elongation factor 2] + 4 S-adenosyl-L-methionine = diphthine methyl ester-[translation elongation factor 2] + 4 S-adenosyl-L-homocysteine + 3 H(+). The protein operates within protein modification; peptidyl-diphthamide biosynthesis. S-adenosyl-L-methionine-dependent methyltransferase that catalyzes four methylations of the modified target histidine residue in translation elongation factor 2 (EF-2), to form an intermediate called diphthine methyl ester. The four successive methylation reactions represent the second step of diphthamide biosynthesis. In Emericella nidulans (strain FGSC A4 / ATCC 38163 / CBS 112.46 / NRRL 194 / M139) (Aspergillus nidulans), this protein is Diphthine methyl ester synthase (dph5).